Reading from the N-terminus, the 136-residue chain is NLP effector protein 13 (136 aa).

The Conserved undecapeptide motif I motif lies at 1–9 (MYSWYFPKD). A Hepta-peptide GHRHDWE motif II motif is present at residues 16 to 22 (GHRHDWE).

The protein belongs to the Necrosis inducing protein (NPP1) family.

It localises to the secreted. Its function is as follows. Secreted effector that contributes moderately to virulence during infection by P.capsici. Causes only small yellow areas at 3 days after inoculation of host C.annuum leaves; these areas expand somewhat and became necrotic at 7 days after inoculation. Leads only to chlorotic areas, without necrosis at 7 days after non-host N.benthamiana leaves infection. The sequence is that of NLP effector protein 13 from Phytophthora capsici.